A 244-amino-acid polypeptide reads, in one-letter code: 1-(5-phosphoribosyl)-5-[(5-phosphoribosylamino)methylideneamino] imidazole-4-carboxamide isomerase (244 aa).

The active-site Proton acceptor is the Asp10. Asp129 (proton donor) is an active-site residue.

It belongs to the HisA/HisF family.

The protein resides in the cytoplasm. It catalyses the reaction 1-(5-phospho-beta-D-ribosyl)-5-[(5-phospho-beta-D-ribosylamino)methylideneamino]imidazole-4-carboxamide = 5-[(5-phospho-1-deoxy-D-ribulos-1-ylimino)methylamino]-1-(5-phospho-beta-D-ribosyl)imidazole-4-carboxamide. The protein operates within amino-acid biosynthesis; L-histidine biosynthesis; L-histidine from 5-phospho-alpha-D-ribose 1-diphosphate: step 4/9. The sequence is that of 1-(5-phosphoribosyl)-5-[(5-phosphoribosylamino)methylideneamino] imidazole-4-carboxamide isomerase from Rhodococcus opacus (strain B4).